A 259-amino-acid polypeptide reads, in one-letter code: Global transcriptional regulator CodY (259 aa).

The GAF domain stretch occupies residues 1–155 (MNLLEKTRKI…GATVVGMEIL (155 aa)). The H-T-H motif DNA-binding region spans 203–222 (ASKIADRVGITRSVIVNALR). The residue at position 215 (Ser215) is a Phosphoserine.

Belongs to the CodY family.

The protein localises to the cytoplasm. DNA-binding global transcriptional regulator which is involved in the adaptive response to starvation and acts by directly or indirectly controlling the expression of numerous genes in response to nutrient availability. During rapid exponential growth, CodY is highly active and represses genes whose products allow adaptation to nutrient depletion. The chain is Global transcriptional regulator CodY from Geobacillus thermodenitrificans (strain NG80-2).